Consider the following 328-residue polypeptide: Methionyl-tRNA formyltransferase (328 aa).

Ser121–Pro124 provides a ligand contact to (6S)-5,6,7,8-tetrahydrofolate.

Belongs to the Fmt family.

It catalyses the reaction L-methionyl-tRNA(fMet) + (6R)-10-formyltetrahydrofolate = N-formyl-L-methionyl-tRNA(fMet) + (6S)-5,6,7,8-tetrahydrofolate + H(+). In terms of biological role, attaches a formyl group to the free amino group of methionyl-tRNA(fMet). The formyl group appears to play a dual role in the initiator identity of N-formylmethionyl-tRNA by promoting its recognition by IF2 and preventing the misappropriation of this tRNA by the elongation apparatus. In Paraburkholderia xenovorans (strain LB400), this protein is Methionyl-tRNA formyltransferase.